We begin with the raw amino-acid sequence, 322 residues long: Deoxyhypusine hydroxylase (322 aa).

HEAT-like PBS-type repeat units lie at residues 76-102 (LKHE…VMLD), 109-135 (VRHE…SRRE), 234-260 (FKHE…VLKR), and 267-293 (VRHE…HLQD). Fe cation-binding residues include His-78, Glu-79, His-111, Glu-112, His-236, Glu-237, His-269, and Glu-270.

It belongs to the deoxyhypusine hydroxylase family. It depends on Fe(2+) as a cofactor.

It is found in the cytoplasm. Its subcellular location is the nucleus. It catalyses the reaction [eIF5A protein]-deoxyhypusine + AH2 + O2 = [eIF5A protein]-hypusine + A + H2O. The protein operates within protein modification; eIF5A hypusination. Catalyzes the hydroxylation of the N(6)-(4-aminobutyl)-L-lysine intermediate to form hypusine, an essential post-translational modification only found in mature eIF-5A factor. This is Deoxyhypusine hydroxylase from Eremothecium gossypii (strain ATCC 10895 / CBS 109.51 / FGSC 9923 / NRRL Y-1056) (Yeast).